Reading from the N-terminus, the 119-residue chain is Basic phospholipase A2 (119 aa).

7 cysteine pairs are disulfide-bonded: C11–C71, C27–C118, C29–C45, C44–C99, C51–C92, C60–C85, and C78–C90. Ca(2+) contacts are provided by Y28, G30, and G32. H48 is an active-site residue. D49 contacts Ca(2+). D93 is an active-site residue.

Belongs to the phospholipase A2 family. Group I subfamily. D49 sub-subfamily. Ca(2+) is required as a cofactor. Expressed by the venom gland.

The protein localises to the secreted. It carries out the reaction a 1,2-diacyl-sn-glycero-3-phosphocholine + H2O = a 1-acyl-sn-glycero-3-phosphocholine + a fatty acid + H(+). Snake venom phospholipase A2 (PLA2) that has several activities. It is myotoxic, has weak anticoagulant activity and inhibits neuromuscular transmission by blocking acetylcholine release from the nerve termini. PLA2 catalyzes the calcium-dependent hydrolysis of the 2-acyl groups in 3-sn-phosphoglycerides. The polypeptide is Basic phospholipase A2 (Hydrophis schistosus (Beaked sea snake)).